Consider the following 328-residue polypeptide: MKPLMLQGHERAITQIKYNREGDLIFSTAKDHKPSVWFSLNGERLGTYNGHQGAVWCVDVDWTTTRLITGAGDMSTKLWDVETGSVLGTIPCNSAARTANFSFSGNQASYSTDKAMGHNSELFIIDVRNVDSSISSQSPVLKLTMNQSIQTKITSMLWGALDETVITGHENGSIRIWDLRTAKELNSVNDHTGVINDMQLSADGTMLVSASKDTTAKLFDSESLMCLKTYKTERPVNSAAISPIHEHVVLGGGQEAMEVTTTSTKSGKFDSRLFHLVYEEEFARVKGHFGPINSLAFHPDGKSYATGGEDGFVRVQVFDASYYEFVFE.

5 WD repeats span residues G8 to T47, G50 to P91, S148 to S187, D190 to T229, and G287 to E328.

Belongs to the eIF-3 subunit I family. As to quaternary structure, component of the eukaryotic translation initiation factor 3 (eIF-3) complex.

It is found in the cytoplasm. Component of the eukaryotic translation initiation factor 3 (eIF-3) complex, which is involved in protein synthesis of a specialized repertoire of mRNAs and, together with other initiation factors, stimulates binding of mRNA and methionyl-tRNAi to the 40S ribosome. The eIF-3 complex specifically targets and initiates translation of a subset of mRNAs involved in cell proliferation. This chain is Eukaryotic translation initiation factor 3 subunit I, found in Culex quinquefasciatus (Southern house mosquito).